Reading from the N-terminus, the 809-residue chain is Protein TOC75, chloroplastic (809 aa).

A compositionally biased stretch (polar residues) spans M1–H17. Residues M1–C35 constitute a chloroplast transit peptide. Residues M1–N44 are disordered. A chloroplast; outer membrane-targeting transit peptide spans H36–A131. Residues D132–E143 lie on the Chloroplast intermembrane side of the membrane. The chain crosses the membrane as a beta stranded span at residues L144–L152. The Cytoplasmic segment spans residues G153–K160. A beta stranded transmembrane segment spans residues Y161–F169. Residues D170–D225 are Chloroplast intermembrane-facing. Residues G226–F234 traverse the membrane as a beta stranded segment. At A235 to C247 the chain is on the cytoplasmic side. A beta stranded membrane pass occupies residues I248–G254. The Chloroplast intermembrane segment spans residues Q255–I357. A beta stranded transmembrane segment spans residues T358 to L365. Residues D366–L410 lie on the Cytoplasmic side of the membrane. A beta stranded transmembrane segment spans residues A411–V418. The Chloroplast intermembrane portion of the chain corresponds to N419–E427. Residues G428–L436 traverse the membrane as a beta stranded segment. Topologically, residues K437–K442 are cytoplasmic. The beta stranded transmembrane segment at S443–I452 threads the bilayer. At V453 to S464 the chain is on the chloroplast intermembrane side. The chain crosses the membrane as a beta stranded span at residues L465–F473. The Cytoplasmic portion of the chain corresponds to E474–D500. Residues L501 to H509 traverse the membrane as a beta stranded segment. Residues P510–R553 are Chloroplast intermembrane-facing. Residues A554–T561 form a beta stranded membrane-spanning segment. Topologically, residues E562–K569 are cytoplasmic. The beta stranded transmembrane segment at F570–E577 threads the bilayer. The Chloroplast intermembrane portion of the chain corresponds to E578–P684. Residues P685–Y693 traverse the membrane as a beta stranded segment. The Cytoplasmic portion of the chain corresponds to G694 to A705. The chain crosses the membrane as a beta stranded span at residues F706 to V714. The Chloroplast intermembrane segment spans residues R715 to S776. Residues Y777 to L783 traverse the membrane as a beta stranded segment. Topologically, residues G784–G797 are cytoplasmic. The beta stranded transmembrane segment at T798–F805 threads the bilayer. At G806–F809 the chain is on the chloroplast intermembrane side.

This sequence belongs to the TOC75 family. Part of the TOC core complex that includes a protein for the specific recognition of transit peptides surrounded by a ring composed of four proteins forming translocation channels, and four to five GTP-binding proteins providing energy. This core complex can interact with components of the TIC complex to form a larger import complex. Chloroplastic protein precursors such as prSS (precursor of the RuBisCO small subunit) also interact with these complexes. TOC75 interacts with OEP14, TOC34/OEP34, TOC86/OEP86, TIC55, TIC110/IEP110 and CLPC. Mostly expressed in young leaves, also present in old leaves, roots and stems (at protein level).

Its subcellular location is the plastid. The protein resides in the chloroplast outer membrane. Functionally, mediates the insertion of proteins targeted to the outer membrane of chloroplasts. Required for the import of protein precursors into chloroplasts. Forms the voltage-dependent preprotein translocation channels (hydrophilic beta barrel) of the TOC complex in the chloroplastic outer membrane. The narrowest inner diameter of this channel is approximately 14 Angstroms. This Pisum sativum (Garden pea) protein is Protein TOC75, chloroplastic (TOC75).